A 180-amino-acid polypeptide reads, in one-letter code: ATP synthase subunit b (180 aa).

A helical membrane pass occupies residues Leu-15–Val-35.

The protein belongs to the ATPase B chain family. In terms of assembly, F-type ATPases have 2 components, F(1) - the catalytic core - and F(0) - the membrane proton channel. F(1) has five subunits: alpha(3), beta(3), gamma(1), delta(1), epsilon(1). F(0) has three main subunits: a(1), b(2) and c(10-14). The alpha and beta chains form an alternating ring which encloses part of the gamma chain. F(1) is attached to F(0) by a central stalk formed by the gamma and epsilon chains, while a peripheral stalk is formed by the delta and b chains.

Its subcellular location is the cell membrane. F(1)F(0) ATP synthase produces ATP from ADP in the presence of a proton or sodium gradient. F-type ATPases consist of two structural domains, F(1) containing the extramembraneous catalytic core and F(0) containing the membrane proton channel, linked together by a central stalk and a peripheral stalk. During catalysis, ATP synthesis in the catalytic domain of F(1) is coupled via a rotary mechanism of the central stalk subunits to proton translocation. Its function is as follows. Component of the F(0) channel, it forms part of the peripheral stalk, linking F(1) to F(0). This Streptomyces avermitilis (strain ATCC 31267 / DSM 46492 / JCM 5070 / NBRC 14893 / NCIMB 12804 / NRRL 8165 / MA-4680) protein is ATP synthase subunit b.